Here is a 243-residue protein sequence, read N- to C-terminus: MDGFGSSQAPAAYREVEWIADVFVIGMGIGWIINYVGMVYGSLKGRTYGMAIMPLCCNIAWEIVYGLIYPSKTLYEQGVFLSGLTINLGVIYTAIKFGPKEWTHAPLVMHNLPLIFMLGILGFLTGHLALAAEIGPALAYNWGAAFCQLLLSVGGLCQLISRGSTRGASYTLWLSRFLGSFSVVISAWLRYKYWPQAFSWLGKPLILWCLFAWLVVDGSYGVCFYYVKRYERRIGHDSDRKTV.

The next 7 membrane-spanning stretches (helical) occupy residues 19–39 (IADV…VGMV), 48–68 (YGMA…YGLI), 78–98 (GVFL…IKFG), 112–132 (LPLI…ALAA), 134–154 (IGPA…LSVG), 169–189 (SYTL…SAWL), and 205–225 (LILW…VCFY).

This sequence belongs to the paxB family.

The protein localises to the membrane. In terms of biological role, terpene cyclase; part of the ATM2 gene cluster that mediates the biosynthesis of aflatrem, a tremorgenic mycotoxin with acute neurotoxic effects. Synthesis of geranylgeranyl diphosphate (GGPP) by AtmG (a GGPP synthase) precedes condensation of GGPP with indole 3-glycerol phosphate, followed by epoxidation and cyclization by AtmM (a FAD-dependent monooxygenase) and AtmC (a prenyltransferase) to produce paspaline. AtmB is also essential for paspaline production, but its exact role has not been identified yet. AtmP, a cytochrome P450 monooxygenase, subsequently converts paspaline to 13-desoxypaxilline via PC-M6 by removal of the C-30 methyl group and oxidation at C-10. AtmQ, a cytochrome P450 monooxygenase, then catalyzes the oxidation of 13-desoxypaxilline, first at C-7 to produce paspalicine and then at C-13 to form paspalinine. Finally, AtmD prenylates paspalinine to form aflatrem. This is Terpene cyclase atmB from Aspergillus flavus.